The chain runs to 130 residues: uncharacterized protein (130 aa).

The segment at 23–130 (SHLRLLPTAN…GAHQLSSPSS (108 aa)) is disordered. Positions 30–45 (TANSPSGSNQPTNPNR) are enriched in polar residues.

This is an uncharacterized protein from Homo sapiens (Human).